The following is a 138-amino-acid chain: uncharacterized protein (138 aa).

The tract at residues 74-96 is disordered; the sequence is RRRSPSLPARRPPTPREDALEDY. Residues 87–96 show a composition bias toward basic and acidic residues; it reads TPREDALEDY.

This is an uncharacterized protein from Orgyia pseudotsugata (Douglas-fir tussock moth).